The primary structure comprises 600 residues: Elongation factor 4 (600 aa).

Positions 4–186 constitute a tr-type G domain; that stretch reads SKIRNFSIIA…AIVNKIPAPY (183 aa). GTP contacts are provided by residues 16–21 and 133–136; these read DHGKST and NKVD.

Belongs to the TRAFAC class translation factor GTPase superfamily. Classic translation factor GTPase family. LepA subfamily.

It is found in the cell membrane. The catalysed reaction is GTP + H2O = GDP + phosphate + H(+). Required for accurate and efficient protein synthesis under certain stress conditions. May act as a fidelity factor of the translation reaction, by catalyzing a one-codon backward translocation of tRNAs on improperly translocated ribosomes. Back-translocation proceeds from a post-translocation (POST) complex to a pre-translocation (PRE) complex, thus giving elongation factor G a second chance to translocate the tRNAs correctly. Binds to ribosomes in a GTP-dependent manner. The chain is Elongation factor 4 from Mesoplasma florum (strain ATCC 33453 / NBRC 100688 / NCTC 11704 / L1) (Acholeplasma florum).